Reading from the N-terminus, the 248-residue chain is 2,3-bisphosphoglycerate-dependent phosphoglycerate mutase (248 aa).

Substrate is bound by residues 8–15 (RHGESQWN), 21–22 (TG), arginine 60, 87–90 (ERHY), lysine 98, 114–115 (RR), and 183–184 (GN). Histidine 9 serves as the catalytic Tele-phosphohistidine intermediate. The active-site Proton donor/acceptor is glutamate 87.

Belongs to the phosphoglycerate mutase family. BPG-dependent PGAM subfamily. Homodimer.

The catalysed reaction is (2R)-2-phosphoglycerate = (2R)-3-phosphoglycerate. It functions in the pathway carbohydrate degradation; glycolysis; pyruvate from D-glyceraldehyde 3-phosphate: step 3/5. Its function is as follows. Catalyzes the interconversion of 2-phosphoglycerate and 3-phosphoglycerate. The sequence is that of 2,3-bisphosphoglycerate-dependent phosphoglycerate mutase from Teredinibacter turnerae (strain ATCC 39867 / T7901).